The sequence spans 249 residues: 5'-nucleotidase SurE (249 aa).

A divalent metal cation contacts are provided by Asp-8, Asp-9, Ser-39, and Asn-91.

The protein belongs to the SurE nucleotidase family. The cofactor is a divalent metal cation.

It is found in the cytoplasm. The catalysed reaction is a ribonucleoside 5'-phosphate + H2O = a ribonucleoside + phosphate. Nucleotidase that shows phosphatase activity on nucleoside 5'-monophosphates. The sequence is that of 5'-nucleotidase SurE from Pseudomonas putida (strain W619).